Reading from the N-terminus, the 236-residue chain is EF-hand domain-containing protein D1 (236 aa).

The interval 1-48 (MASEELASKLQRRLQWEEGDSGLQPAPGAAPDPEPQPQPPAWAPTARA) is disordered. Residues 28–42 (GAAPDPEPQPQPPAW) are compositionally biased toward pro residues. EF-hand domains follow at residues 87 to 122 (RLIK…LGAP) and 123 to 158 (QTHL…AAAG). Ca(2+)-binding residues include D100, D104, E111, D136, D138, D140, K142, and E147.

It is found in the mitochondrion inner membrane. In terms of biological role, acts as a calcium sensor for mitochondrial flash (mitoflash) activation, an event characterized by stochastic bursts of superoxide production. May play a role in neuronal differentiation. The protein is EF-hand domain-containing protein D1 (EFHD1) of Bos taurus (Bovine).